We begin with the raw amino-acid sequence, 174 residues long: Stigma-specific STIG1-like protein 4 (174 aa).

Residues Met1–Gly25 form the signal peptide. The disordered stretch occupies residues Pro140 to Glu174. Over residues Gly145–Arg157 the composition is skewed to basic residues.

This sequence belongs to the STIG1 family.

It is found in the secreted. Endosperm-specific cysteine-rich protein that acts downstream of BHLH95/ZOU to modify the interface between embryo and endosperm and mediate the separation of these two tissues during seed development. Necessary for the biogenesis of the embryo sheath, an extracuticular endosperm-derived structure at the surface of the embryo. Required for the separation of embryo and endosperm, and for normal progression of the embryo through the endosperm tissue. Required for the formation of a normal embryonic cuticle. The chain is Stigma-specific STIG1-like protein 4 from Arabidopsis thaliana (Mouse-ear cress).